Here is a 791-residue protein sequence, read N- to C-terminus: Lon protease (791 aa).

The Lon N-terminal domain occupies 28–223 (LPVVVISEIM…YILQDIQSLL (196 aa)). An ATP-binding site is contributed by 374 to 381 (GPPGVGKT). The region spanning 610–791 (KEKIGSTNGL…SDVFSQVFVV (182 aa)) is the Lon proteolytic domain. Residues serine 697 and lysine 740 contribute to the active site.

It belongs to the peptidase S16 family. As to quaternary structure, homohexamer. Organized in a ring with a central cavity.

The protein resides in the cytoplasm. The catalysed reaction is Hydrolysis of proteins in presence of ATP.. In terms of biological role, ATP-dependent serine protease that mediates the selective degradation of mutant and abnormal proteins as well as certain short-lived regulatory proteins. Required for cellular homeostasis and for survival from DNA damage and developmental changes induced by stress. Degrades polypeptides processively to yield small peptide fragments that are 5 to 10 amino acids long. Binds to DNA in a double-stranded, site-specific manner. This is Lon protease from Aster yellows witches'-broom phytoplasma (strain AYWB).